The chain runs to 384 residues: Acetylornithine aminotransferase (384 aa).

Pyridoxal 5'-phosphate is bound by residues 94-95 and phenylalanine 121; that span reads GT. Arginine 124 serves as a coordination point for N(2)-acetyl-L-ornithine. 206–209 lines the pyridoxal 5'-phosphate pocket; the sequence is DEVQ. An N6-(pyridoxal phosphate)lysine modification is found at lysine 235. Position 263 (serine 263) interacts with N(2)-acetyl-L-ornithine. A pyridoxal 5'-phosphate-binding site is contributed by threonine 264.

The protein belongs to the class-III pyridoxal-phosphate-dependent aminotransferase family. ArgD subfamily. As to quaternary structure, homodimer. Requires pyridoxal 5'-phosphate as cofactor.

It is found in the cytoplasm. The enzyme catalyses N(2)-acetyl-L-ornithine + 2-oxoglutarate = N-acetyl-L-glutamate 5-semialdehyde + L-glutamate. Its pathway is amino-acid biosynthesis; L-arginine biosynthesis; N(2)-acetyl-L-ornithine from L-glutamate: step 4/4. This is Acetylornithine aminotransferase from Listeria innocua serovar 6a (strain ATCC BAA-680 / CLIP 11262).